The primary structure comprises 130 residues: Keratin, high-sulfur matrix protein, IIIA3A (130 aa).

In terms of tissue distribution, wool.

Functionally, the keratin products of mammalian epidermal derivatives such as wool and hair consist of microfibrils embedded in a rigid matrix of other proteins. The matrix proteins include the high-sulfur and high-tyrosine keratins, having molecular weights of 6-20 kDa, whereas the microfibrils contain the larger, low-sulfur keratins (40-56 kDa). In Ovis aries (Sheep), this protein is Keratin, high-sulfur matrix protein, IIIA3A.